The primary structure comprises 489 residues: DNA-directed RNA polymerase subunit beta' C-terminal section (489 aa).

Mg(2+) is bound by residues Asp-208, Asp-210, and Asp-212.

Belongs to the RNA polymerase beta' chain family. RpoC1 subfamily. In plastids the minimal PEP RNA polymerase catalytic core is composed of four subunits: alpha, beta, beta', and beta''. When a (nuclear-encoded) sigma factor is associated with the core the holoenzyme is formed, which can initiate transcription. Requires Mg(2+) as cofactor.

It is found in the plastid. The protein localises to the chloroplast. The enzyme catalyses RNA(n) + a ribonucleoside 5'-triphosphate = RNA(n+1) + diphosphate. DNA-dependent RNA polymerase catalyzes the transcription of DNA into RNA using the four ribonucleoside triphosphates as substrates. The protein is DNA-directed RNA polymerase subunit beta' C-terminal section (rpoC1B) of Chlamydomonas reinhardtii (Chlamydomonas smithii).